A 411-amino-acid chain; its full sequence is Elongation factor 1-gamma (411 aa).

The region spanning 3-84 (LTLWSGVNPE…HIARLDRSGG (82 aa)) is the GST N-terminal domain. In terms of domain architecture, GST C-terminal spans 90 to 216 (TPLEGSQVDM…QGATFGAREG (127 aa)). Positions 212–265 (GAREGGAKGQGRGCARPGREEAERAAAAADGAEEEDEAPREKKKPNPLDELPPS) are disordered. The segment covering 214-223 (REGGAKGQGR) has biased composition (gly residues). In terms of domain architecture, EF-1-gamma C-terminal spans 255–411 (KPNPLDELPP…RPVLEGRVFK (157 aa)).

In terms of assembly, EF-1 is composed of four subunits: alpha, beta, delta, and gamma.

Its function is as follows. Probably plays a role in anchoring the complex to other cellular components. This is Elongation factor 1-gamma from Trypanosoma cruzi.